We begin with the raw amino-acid sequence, 303 residues long: MITAKAVKELRERTGAGMMDCKKALTETNGDMEKAVEVLREKGLAAAAKKAGRVAAEGIVKTYVSEDMKKGSIVEINCETDFVALNEEFVGFAGRVAELVANSNVNTVEELLAEKLDGDKTVQEVLTELIAKIGENMSVRRFERFSVESGLVQSYIHGGGRIGVMAELACEASSPVLAEVAKDVCMQIAAANPLFLSEADVDQESLEKEKEIYRAQALNEGKPEHIVDKMVMGRIKKYCKEVCLLDQAWVKDGDKSIAKLLEEKSKEVGSPITITKFVRFERGEGIEKKEENFAEEVAKMGGK.

The tract at residues 80-83 (TDFV) is involved in Mg(2+) ion dislocation from EF-Tu.

The protein belongs to the EF-Ts family.

The protein resides in the cytoplasm. Functionally, associates with the EF-Tu.GDP complex and induces the exchange of GDP to GTP. It remains bound to the aminoacyl-tRNA.EF-Tu.GTP complex up to the GTP hydrolysis stage on the ribosome. This is Elongation factor Ts from Clostridium perfringens (strain ATCC 13124 / DSM 756 / JCM 1290 / NCIMB 6125 / NCTC 8237 / Type A).